A 351-amino-acid polypeptide reads, in one-letter code: Tropomodulin-2 (351 aa).

At S25 the chain carries Phosphoserine.

This sequence belongs to the tropomodulin family. As to quaternary structure, binds to the N-terminus of tropomyosin and to actin. Neuronal-tissue specific.

The protein resides in the cytoplasm. It localises to the cytoskeleton. Blocks the elongation and depolymerization of the actin filaments at the pointed end. The Tmod/TM complex contributes to the formation of the short actin protofilament, which in turn defines the geometry of the membrane skeleton. The protein is Tropomodulin-2 (TMOD2) of Homo sapiens (Human).